A 530-amino-acid chain; its full sequence is Ubiquitin carboxyl-terminal hydrolase 17-like protein 22 (530 aa).

Residues 80 to 375 enclose the USP domain; it reads AGLQNMGNTC…QAYVLFYIQK (296 aa). C89 serves as the catalytic Nucleophile. The active-site Proton acceptor is the H334. Basic and acidic residues-rich tracts occupy residues 382-392 and 398-412; these read SESVSRGREPR and DTDR…KRDH. 2 disordered regions span residues 382 to 412 and 476 to 530; these read SESV…KRDH and KNHH…LVCQ. Residues 484–495 show a composition bias toward low complexity; sequence SSLLKLSSTTPT. Over residues 496–505 the composition is skewed to polar residues; sequence HQESMNTGTL. Positions 510-524 are enriched in basic residues; sequence GRARRSKGKNKHSKR.

This sequence belongs to the peptidase C19 family. USP17 subfamily.

Its subcellular location is the nucleus. The protein resides in the endoplasmic reticulum. The enzyme catalyses Thiol-dependent hydrolysis of ester, thioester, amide, peptide and isopeptide bonds formed by the C-terminal Gly of ubiquitin (a 76-residue protein attached to proteins as an intracellular targeting signal).. Deubiquitinating enzyme that removes conjugated ubiquitin from specific proteins to regulate different cellular processes that may include cell proliferation, progression through the cell cycle, apoptosis, cell migration, and the cellular response to viral infection. In Homo sapiens (Human), this protein is Ubiquitin carboxyl-terminal hydrolase 17-like protein 22 (USP17L22).